Reading from the N-terminus, the 48-residue chain is Cathepsin B (48 aa).

It belongs to the peptidase C1 family. Dimer of a heavy chain and a light chain cross-linked by a disulfide bond.

It localises to the lysosome. The enzyme catalyses Hydrolysis of proteins with broad specificity for peptide bonds. Preferentially cleaves -Arg-Arg-|-Xaa bonds in small molecule substrates (thus differing from cathepsin L). In addition to being an endopeptidase, shows peptidyl-dipeptidase activity, liberating C-terminal dipeptides.. Thiol protease which is believed to participate in intracellular degradation and turnover of proteins. Has also been implicated in tumor invasion and metastasis. The chain is Cathepsin B (CTSB) from Coturnix japonica (Japanese quail).